The primary structure comprises 572 residues: Mitochondrial chaperone TCM62 (572 aa).

The N-terminal 16 residues, methionine 1–cysteine 16, are a transit peptide targeting the mitochondrion. The Mitochondrial matrix segment spans residues serine 17–lysine 471. A helical membrane pass occupies residues valine 472–alanine 488. Topologically, residues phenylalanine 489–alanine 572 are mitochondrial intermembrane.

It belongs to the chaperonin (HSP60) family. Forms a high molecular mass protein complex of approximately 850 kDa.

Its subcellular location is the mitochondrion inner membrane. In terms of biological role, chaperone. Required for the assembly of succinate dehydrogenase subunits. Ensures mitochondrial gene expression at elevated temperatures and prevents heat-aggregation of the ribosomal subunit VAR1. This chain is Mitochondrial chaperone TCM62 (TCM62), found in Saccharomyces cerevisiae (strain ATCC 204508 / S288c) (Baker's yeast).